A 202-amino-acid chain; its full sequence is Thymidylate kinase (202 aa).

7–14 (GIDGSGKT) provides a ligand contact to ATP.

It belongs to the thymidylate kinase family.

The enzyme catalyses dTMP + ATP = dTDP + ADP. Its function is as follows. Phosphorylation of dTMP to form dTDP in both de novo and salvage pathways of dTTP synthesis. The chain is Thymidylate kinase from Ehrlichia ruminantium (strain Gardel).